Reading from the N-terminus, the 107-residue chain is Pyrimidine/purine nucleoside phosphorylase (107 aa).

Belongs to the nucleoside phosphorylase PpnP family.

It catalyses the reaction a purine D-ribonucleoside + phosphate = a purine nucleobase + alpha-D-ribose 1-phosphate. The catalysed reaction is adenosine + phosphate = alpha-D-ribose 1-phosphate + adenine. It carries out the reaction cytidine + phosphate = cytosine + alpha-D-ribose 1-phosphate. The enzyme catalyses guanosine + phosphate = alpha-D-ribose 1-phosphate + guanine. It catalyses the reaction inosine + phosphate = alpha-D-ribose 1-phosphate + hypoxanthine. The catalysed reaction is thymidine + phosphate = 2-deoxy-alpha-D-ribose 1-phosphate + thymine. It carries out the reaction uridine + phosphate = alpha-D-ribose 1-phosphate + uracil. The enzyme catalyses xanthosine + phosphate = alpha-D-ribose 1-phosphate + xanthine. Catalyzes the phosphorolysis of diverse nucleosides, yielding D-ribose 1-phosphate and the respective free bases. Can use uridine, adenosine, guanosine, cytidine, thymidine, inosine and xanthosine as substrates. Also catalyzes the reverse reactions. The sequence is that of Pyrimidine/purine nucleoside phosphorylase from Azoarcus sp. (strain BH72).